Reading from the N-terminus, the 419-residue chain is MWPGNAWRAALFWVPRGRRAQSALAQLRGILEGELEGIRGAGTWKSERVITSRQGPHIRVDGVSGGILNFCANNYLGLSSHPEVIQAGLQALEEFGAGLSSVRFICGTQSIHKNLEAKIARFHQREDAILYPSCYDANAGLFEALLTPEDAVLSDELNHASIIDGIRLCKAHKYRYRHLDMADLEAKLQEAQKHRLRLVATDGAFSMDGDIAPLQEICCLASRYGALVFMDECHATGFLGPTGRGTDELLGVMDQVTIINSTLGKALGGASGGYTTGPGPLVSLLRQRARPYLFSNSLPPAVVGCASKALDLLMGSNTIVQSMAAKTQRFRSKMEAAGFTISGASHPICPVMLGDARLASRMADDMLKRGIFVIGFSYPVVPKGKARIRVQISAVHSEEDIDRCVEAFVEVGRLHGALP.

Residues 1 to 21 (MWPGNAWRAALFWVPRGRRAQ) constitute a mitochondrion transit peptide. Lysine 45 carries the post-translational modification N6-acetyllysine; alternate. Lysine 45 carries the post-translational modification N6-succinyllysine; alternate. Pyridoxal 5'-phosphate is bound at residue 134-135 (CY). Histidine 159 is a substrate binding site. Lysine 187 carries the post-translational modification N6-acetyllysine; alternate. Lysine 187 is subject to N6-succinyllysine; alternate. Pyridoxal 5'-phosphate-binding positions include serine 206, 262–265 (TLGK), and 295–296 (SN). Lysine 265 bears the N6-(pyridoxal phosphate)lysine mark. 2 positions are modified to N6-succinyllysine: lysine 326 and lysine 368. Position 383 is an N6-acetyllysine; alternate (lysine 383). An N6-succinyllysine; alternate modification is found at lysine 383. Arginine 389 serves as a coordination point for substrate.

Belongs to the class-II pyridoxal-phosphate-dependent aminotransferase family. Pyridoxal 5'-phosphate serves as cofactor. In terms of tissue distribution, strongly expressed in heart, brain, liver and pancreas. Also found in lung.

The protein localises to the mitochondrion. It is found in the nucleus. It catalyses the reaction glycine + acetyl-CoA = (2S)-2-amino-3-oxobutanoate + CoA. Its function is as follows. Pyridoxal phosphate (PLP) dependent enzyme, which catalyzes the cleavage of 2-amino-3-oxobutanoate to glycine and acetyl-CoA. This is 2-amino-3-ketobutyrate coenzyme A ligase, mitochondrial from Homo sapiens (Human).